The chain runs to 391 residues: 3-ketoacyl-CoA thiolase (391 aa).

Cysteine 95 serves as the catalytic Acyl-thioester intermediate. Residues histidine 347 and cysteine 377 each act as proton acceptor in the active site.

This sequence belongs to the thiolase-like superfamily. Thiolase family. Heterotetramer of two alpha chains (FadB) and two beta chains (FadA).

The protein resides in the cytoplasm. It catalyses the reaction an acyl-CoA + acetyl-CoA = a 3-oxoacyl-CoA + CoA. It functions in the pathway lipid metabolism; fatty acid beta-oxidation. In terms of biological role, catalyzes the final step of fatty acid oxidation in which acetyl-CoA is released and the CoA ester of a fatty acid two carbons shorter is formed. In Hahella chejuensis (strain KCTC 2396), this protein is 3-ketoacyl-CoA thiolase.